The chain runs to 218 residues: MRLILLGAPGAGKGTQATFICQKYGIPQISTGDMLRAAVKAGTPLGIEAKKVMDAGGLVSDDLIINLVKERIAQSDCAAGFLFDGFPRTIPQADAMKAAGVKLDYVLEIDVPFDAIIERMSGRRSHAASGRTYHVKFNPPKVAGVDDVTGEPLIQRDDDKEETVKKRLEVYSAQTRPLVDYYSNWAKAEPAAAPKYRAISGTGGVDEITARAFAALAG.

ATP is bound at residue 10–15 (GAGKGT). The NMP stretch occupies residues 30–59 (STGDMLRAAVKAGTPLGIEAKKVMDAGGLV). Residues T31, R36, 57 to 59 (GLV), 85 to 88 (GFPR), and Q92 each bind AMP. The LID stretch occupies residues 122–159 (GRRSHAASGRTYHVKFNPPKVAGVDDVTGEPLIQRDDD). ATP is bound by residues R123 and 132–133 (TY). 2 residues coordinate AMP: R156 and R167. G203 is an ATP binding site.

Belongs to the adenylate kinase family. Monomer.

It localises to the cytoplasm. The catalysed reaction is AMP + ATP = 2 ADP. It functions in the pathway purine metabolism; AMP biosynthesis via salvage pathway; AMP from ADP: step 1/1. Functionally, catalyzes the reversible transfer of the terminal phosphate group between ATP and AMP. Plays an important role in cellular energy homeostasis and in adenine nucleotide metabolism. This is Adenylate kinase from Albidiferax ferrireducens (strain ATCC BAA-621 / DSM 15236 / T118) (Rhodoferax ferrireducens).